The following is a 141-amino-acid chain: Keratin-associated protein 19-2 (141 aa).

Residues 5–135 (SGYSGGLGYG…CRRSSCCGGY (131 aa)) are 48 X 2 AA repeats of G-[YCGS].

This sequence belongs to the KRTAP type 19 family. In terms of assembly, interacts with hair keratins. As to expression, strong expression in narrowly defined pattern restricted to the lower and middle cortical regions of the hair shaft in both developing and cycling hair. During hair follicle regression (catagen), expression levels decrease until expression is no longer detectable in follicles at resting stage (telogen).

In terms of biological role, in the hair cortex, hair keratin intermediate filaments are embedded in an interfilamentous matrix, consisting of hair keratin-associated proteins (KRTAP), which are essential for the formation of a rigid and resistant hair shaft through their extensive disulfide bond cross-linking with abundant cysteine residues of hair keratins. The matrix proteins include the high-sulfur and high-glycine-tyrosine keratins. This Mus musculus (Mouse) protein is Keratin-associated protein 19-2 (Krtap19-2).